The sequence spans 476 residues: Sulfate adenylyltransferase subunit 1 (476 aa).

Residues 24–239 (KSLLRFLTCG…LLETVDVDYE (216 aa)) form the tr-type G domain. The interval 33 to 40 (GSVDDGKS) is G1. 33–40 (GSVDDGKS) contacts GTP. The segment at 91–95 (GITID) is G2. The interval 112 to 115 (DTPG) is G3. Residues 112 to 116 (DTPGH) and 167 to 170 (NKMD) each bind GTP. A G4 region spans residues 167–170 (NKMD). Residues 205 to 207 (SAL) are G5.

Belongs to the TRAFAC class translation factor GTPase superfamily. Classic translation factor GTPase family. CysN/NodQ subfamily. As to quaternary structure, heterodimer composed of CysD, the smaller subunit, and CysN.

It catalyses the reaction sulfate + ATP + H(+) = adenosine 5'-phosphosulfate + diphosphate. Its pathway is sulfur metabolism; hydrogen sulfide biosynthesis; sulfite from sulfate: step 1/3. Its function is as follows. With CysD forms the ATP sulfurylase (ATPS) that catalyzes the adenylation of sulfate producing adenosine 5'-phosphosulfate (APS) and diphosphate, the first enzymatic step in sulfur assimilation pathway. APS synthesis involves the formation of a high-energy phosphoric-sulfuric acid anhydride bond driven by GTP hydrolysis by CysN coupled to ATP hydrolysis by CysD. This chain is Sulfate adenylyltransferase subunit 1, found in Vibrio parahaemolyticus serotype O3:K6 (strain RIMD 2210633).